The sequence spans 246 residues: Ribonuclease 3 (246 aa).

In terms of domain architecture, RNase III spans 18 to 147 (FKELQKKIGI…FIGALYLDQG (130 aa)). Glutamate 60 provides a ligand contact to Mg(2+). Residue aspartate 64 is part of the active site. Mg(2+)-binding residues include aspartate 133 and glutamate 136. The active site involves glutamate 136. In terms of domain architecture, DRBM spans 173–242 (DFKSQLQELV…AQMALQKLKT (70 aa)).

The protein belongs to the ribonuclease III family. In terms of assembly, homodimer. Mg(2+) serves as cofactor.

The protein resides in the cytoplasm. It carries out the reaction Endonucleolytic cleavage to 5'-phosphomonoester.. In terms of biological role, digests double-stranded RNA. Involved in the processing of primary rRNA transcript to yield the immediate precursors to the large and small rRNAs (23S and 16S). Processes some mRNAs, and tRNAs when they are encoded in the rRNA operon. Processes pre-crRNA and tracrRNA of type II CRISPR loci if present in the organism. The protein is Ribonuclease 3 of Geobacillus sp. (strain WCH70).